We begin with the raw amino-acid sequence, 371 residues long: Queuine tRNA-ribosyltransferase (371 aa).

Asp-89 functions as the Proton acceptor in the catalytic mechanism. Substrate contacts are provided by residues 89–93 (DSGGF), Asp-143, Gln-185, and Gly-212. The segment at 243–249 (GVGKPED) is RNA binding. Asp-262 (nucleophile) is an active-site residue. An RNA binding; important for wobble base 34 recognition region spans residues 267-271 (TRNAR). Residues Cys-300, Cys-302, Cys-305, and His-331 each contribute to the Zn(2+) site.

It belongs to the queuine tRNA-ribosyltransferase family. As to quaternary structure, homodimer. Within each dimer, one monomer is responsible for RNA recognition and catalysis, while the other monomer binds to the replacement base PreQ1. Zn(2+) serves as cofactor.

The catalysed reaction is 7-aminomethyl-7-carbaguanine + guanosine(34) in tRNA = 7-aminomethyl-7-carbaguanosine(34) in tRNA + guanine. It functions in the pathway tRNA modification; tRNA-queuosine biosynthesis. In terms of biological role, catalyzes the base-exchange of a guanine (G) residue with the queuine precursor 7-aminomethyl-7-deazaguanine (PreQ1) at position 34 (anticodon wobble position) in tRNAs with GU(N) anticodons (tRNA-Asp, -Asn, -His and -Tyr). Catalysis occurs through a double-displacement mechanism. The nucleophile active site attacks the C1' of nucleotide 34 to detach the guanine base from the RNA, forming a covalent enzyme-RNA intermediate. The proton acceptor active site deprotonates the incoming PreQ1, allowing a nucleophilic attack on the C1' of the ribose to form the product. After dissociation, two additional enzymatic reactions on the tRNA convert PreQ1 to queuine (Q), resulting in the hypermodified nucleoside queuosine (7-(((4,5-cis-dihydroxy-2-cyclopenten-1-yl)amino)methyl)-7-deazaguanosine). The sequence is that of Queuine tRNA-ribosyltransferase from Pseudomonas syringae pv. tomato (strain ATCC BAA-871 / DC3000).